The following is a 104-amino-acid chain: MSDTAEQRWSVYLIRNNRNALYCGVTNDVERRFNQHQSGKGAKALKGKGPLVLEWSCAFENKSMAMKAEYFIKQLTKTKKELLVQESAVIQVGEGQSFVFYSRK.

Residues 7–82 enclose the GIY-YIG domain; sequence QRWSVYLIRN…KQLTKTKKEL (76 aa).

Belongs to the UPF0213 family.

This chain is UPF0213 protein VIBHAR_05350, found in Vibrio campbellii (strain ATCC BAA-1116).